Here is a 491-residue protein sequence, read N- to C-terminus: Aspartyl/glutamyl-tRNA(Asn/Gln) amidotransferase subunit B (491 aa).

The protein belongs to the GatB/GatE family. GatB subfamily. In terms of assembly, heterotrimer of A, B and C subunits.

It carries out the reaction L-glutamyl-tRNA(Gln) + L-glutamine + ATP + H2O = L-glutaminyl-tRNA(Gln) + L-glutamate + ADP + phosphate + H(+). The enzyme catalyses L-aspartyl-tRNA(Asn) + L-glutamine + ATP + H2O = L-asparaginyl-tRNA(Asn) + L-glutamate + ADP + phosphate + 2 H(+). Functionally, allows the formation of correctly charged Asn-tRNA(Asn) or Gln-tRNA(Gln) through the transamidation of misacylated Asp-tRNA(Asn) or Glu-tRNA(Gln) in organisms which lack either or both of asparaginyl-tRNA or glutaminyl-tRNA synthetases. The reaction takes place in the presence of glutamine and ATP through an activated phospho-Asp-tRNA(Asn) or phospho-Glu-tRNA(Gln). This is Aspartyl/glutamyl-tRNA(Asn/Gln) amidotransferase subunit B from Paraburkholderia xenovorans (strain LB400).